Consider the following 83-residue polypeptide: CLAVATA3/ESR (CLE)-related protein 20 (83 aa).

The signal sequence occupies residues 1 to 29 (MKNKNMNPSRPRLLCLIVFLFLVIVLSKA).

It belongs to the CLV3/ESR signal peptide family. As to expression, mostly expressed in roots, seedlings, leaves, flowers, stems and apex, and, to a lower extent, in siliques and pollen.

It localises to the secreted. Its subcellular location is the extracellular space. Its function is as follows. Extracellular signal peptide that regulates cell fate. Represses root apical meristem maintenance. Inhibits irreversibly root growth by reducing cell division rates in the root apical meristem. Regulates the transition of protophloem cells from proliferation to differentiation, thus impinging on postembryonic growth capacity of the root meristem; this signaling pathway requires CRN and CLV2. The chain is CLAVATA3/ESR (CLE)-related protein 20 from Arabidopsis thaliana (Mouse-ear cress).